A 214-amino-acid polypeptide reads, in one-letter code: Adenylate kinase (214 aa).

10-15 is an ATP binding site; it reads GAGKGT. The NMP stretch occupies residues 30–59; the sequence is STGDMLRAAIKAGTELGLEAKRVMDEGKLV. AMP-binding positions include T31, R36, 57–59, 85–88, and Q92; these read KLV and GFPR. The interval 122-159 is LID; it reads GRRVHPASGRVYHVVYNPPKVEGKDNETGDDLIVRDDD. Residues R123 and 132–133 each bind ATP; that span reads VY. 2 residues coordinate AMP: R156 and R167. R200 contacts ATP.

The protein belongs to the adenylate kinase family. As to quaternary structure, monomer.

It localises to the cytoplasm. It catalyses the reaction AMP + ATP = 2 ADP. It participates in purine metabolism; AMP biosynthesis via salvage pathway; AMP from ADP: step 1/1. In terms of biological role, catalyzes the reversible transfer of the terminal phosphate group between ATP and AMP. Plays an important role in cellular energy homeostasis and in adenine nucleotide metabolism. This chain is Adenylate kinase, found in Alteromonas mediterranea (strain DSM 17117 / CIP 110805 / LMG 28347 / Deep ecotype).